A 121-amino-acid polypeptide reads, in one-letter code: Large ribosomal subunit protein bL12 (121 aa).

This sequence belongs to the bacterial ribosomal protein bL12 family. As to quaternary structure, homodimer. Part of the ribosomal stalk of the 50S ribosomal subunit. Forms a multimeric L10(L12)X complex, where L10 forms an elongated spine to which 2 to 4 L12 dimers bind in a sequential fashion. Binds GTP-bound translation factors.

Its function is as follows. Forms part of the ribosomal stalk which helps the ribosome interact with GTP-bound translation factors. Is thus essential for accurate translation. The sequence is that of Large ribosomal subunit protein bL12 from Mesomycoplasma hyopneumoniae (strain 7448) (Mycoplasma hyopneumoniae).